Consider the following 659-residue polypeptide: uncharacterized protein (659 aa).

16 helical membrane-spanning segments follow: residues 24–44 (TTLMVAGLLGNVVAVAAYGLF), 71–91 (FGASLSSALCLGALIYFVMMV), 115–135 (IGWLAFALTMVVVQAANDSGV), 157–177 (RAWIVVTICALLVTLTLRVII), 183–203 (FVLLIPAVIGVIATAVTGNAG), 214–234 (AVIVFALAIAALSGLKITAAL), 242–262 (AVLIVQVVCGVLALAYGAELV), 279–299 (LGLVAGVLVTLVCFSDCWALV), 311–331 (LTALAMMAVTAATAAMSVQTA), 365–385 (FDSLIGATAIVLGIGYVAGFV), 393–413 (TWPVGRLVAWLTGCVALVFTS), 433–453 (MTLNMFIPVLLVLGGPVTLAL), 490–510 (FILFVGSPYIVYFTPLFDTLV), 517–537 (EFMAIHFLLVGYIFYWAIIGI), 550–570 (IGLLFAVMPFHAFFGIALMTM), and 596–616 (IGGAIAWSATELPVIIVIVAL).

It to M.tuberculosis Rv0102.

The protein resides in the cell membrane. This is an uncharacterized protein from Mycobacterium leprae (strain TN).